The following is a 190-amino-acid chain: MLDFIKGKVITVKPDKIVIQTGGIGYSVKIPIRVSRYINRDEETQIFTSLIVKEESIEIYGFLESSERDLFEELIKIAGIGPKMAINILSTYDRETLYKIIDHEDIKSLSKIPGIGKKTAQRILLELRGILPSLQYEKDQKYDDILSALLNLGYKRLEAKEVLDKIYNNEKDEATIIRESLSILAGKDGK.

The domain I stretch occupies residues 1 to 63 (MLDFIKGKVI…EESIEIYGFL (63 aa)). The domain II stretch occupies residues 64–139 (ESSERDLFEE…ILPSLQYEKD (76 aa)). Position 139 (Asp-139) is a region of interest, flexible linker. The segment at 139 to 190 (DQKYDDILSALLNLGYKRLEAKEVLDKIYNNEKDEATIIRESLSILAGKDGK) is domain III.

This sequence belongs to the RuvA family. As to quaternary structure, homotetramer. Forms an RuvA(8)-RuvB(12)-Holliday junction (HJ) complex. HJ DNA is sandwiched between 2 RuvA tetramers; dsDNA enters through RuvA and exits via RuvB. An RuvB hexamer assembles on each DNA strand where it exits the tetramer. Each RuvB hexamer is contacted by two RuvA subunits (via domain III) on 2 adjacent RuvB subunits; this complex drives branch migration. In the full resolvosome a probable DNA-RuvA(4)-RuvB(12)-RuvC(2) complex forms which resolves the HJ.

It is found in the cytoplasm. Functionally, the RuvA-RuvB-RuvC complex processes Holliday junction (HJ) DNA during genetic recombination and DNA repair, while the RuvA-RuvB complex plays an important role in the rescue of blocked DNA replication forks via replication fork reversal (RFR). RuvA specifically binds to HJ cruciform DNA, conferring on it an open structure. The RuvB hexamer acts as an ATP-dependent pump, pulling dsDNA into and through the RuvAB complex. HJ branch migration allows RuvC to scan DNA until it finds its consensus sequence, where it cleaves and resolves the cruciform DNA. The protein is Holliday junction branch migration complex subunit RuvA of Thermodesulfovibrio yellowstonii (strain ATCC 51303 / DSM 11347 / YP87).